A 335-amino-acid polypeptide reads, in one-letter code: Probable phosphoglycerate mutase ARB_03491 (335 aa).

The N-terminal stretch at 1–24 (MAGRILLGLTLLATSLPLLAMGDA) is a signal peptide. The active-site Tele-phosphohistidine intermediate is H108. E211 functions as the Proton donor/acceptor in the catalytic mechanism.

The protein belongs to the phosphoglycerate mutase family.

The protein localises to the secreted. In terms of biological role, probable phosphomutase that may have a function related to the manipulation of phosphate groups on carbohydrates. This is Probable phosphoglycerate mutase ARB_03491 from Arthroderma benhamiae (strain ATCC MYA-4681 / CBS 112371) (Trichophyton mentagrophytes).